The primary structure comprises 922 residues: Ubiquitin carboxyl-terminal hydrolase 29 (922 aa).

The interval Gly160–Lys196 is disordered. Residues Gln170–Glu181 show a composition bias toward polar residues. One can recognise a USP domain in the interval Gln285–Asn885. The Nucleophile role is filled by Cys294. His840 functions as the Proton acceptor in the catalytic mechanism.

This sequence belongs to the peptidase C19 family.

Its subcellular location is the cytoplasm. It localises to the perinuclear region. It carries out the reaction Thiol-dependent hydrolysis of ester, thioester, amide, peptide and isopeptide bonds formed by the C-terminal Gly of ubiquitin (a 76-residue protein attached to proteins as an intracellular targeting signal).. Functionally, deubiquitinase involved in innate antiviral immunity by mediating 'Lys-48'-linked deubiquitination of CGAS, thereby promoting its stabilization. The chain is Ubiquitin carboxyl-terminal hydrolase 29 from Homo sapiens (Human).